Consider the following 1019-residue polypeptide: Exportin-T (1019 aa).

This sequence belongs to the exportin family.

Its subcellular location is the nucleus. It is found in the cytoplasm. In terms of biological role, tRNA nucleus export receptor which facilitates tRNA translocation across the nuclear pore complex. Involved in pre-tRNA splicing, probably by affecting the interaction of pre-tRNA with splicing endonuclease. The chain is Exportin-T (LOS1) from Chaetomium globosum (strain ATCC 6205 / CBS 148.51 / DSM 1962 / NBRC 6347 / NRRL 1970) (Soil fungus).